The following is a 745-amino-acid chain: Polyribonucleotide nucleotidyltransferase (745 aa).

The Mg(2+) site is built by Asp487 and Asp493. The KH domain maps to 554–613; that stretch reads PRIETMQIPTDKIRDVIGTGGKIIREIVEKTGAKINIEDTGVVKIASSDGKAIKAAYNWI. Positions 623–691 constitute an S1 motif domain; it reads GTIYDGTIVK…ERGKIRLSMK (69 aa). A disordered region spans residues 695–745; it reads QETGEDITEKLKAERAERGEPEREERSDRGDRGDRGPRRDRGERRRESSGE. A compositionally biased stretch (basic and acidic residues) spans 701 to 745; sequence ITEKLKAERAERGEPEREERSDRGDRGDRGPRRDRGERRRESSGE.

The protein belongs to the polyribonucleotide nucleotidyltransferase family. The cofactor is Mg(2+).

It is found in the cytoplasm. It catalyses the reaction RNA(n+1) + phosphate = RNA(n) + a ribonucleoside 5'-diphosphate. Functionally, involved in mRNA degradation. Catalyzes the phosphorolysis of single-stranded polyribonucleotides processively in the 3'- to 5'-direction. This is Polyribonucleotide nucleotidyltransferase from Methylorubrum populi (strain ATCC BAA-705 / NCIMB 13946 / BJ001) (Methylobacterium populi).